Here is a 382-residue protein sequence, read N- to C-terminus: Mannosyl phosphorylinositol ceramide synthase SUR1 (382 aa).

Residues 1 to 6 (MRKELK) lie on the Cytoplasmic side of the membrane. Residues 7-27 (YLICFNILLLLSIIYYTFDLL) traverse the membrane as a helical segment. Residues 28-269 (TLCIDDTVKD…KALENHILSC (242 aa)) are Extracellular-facing. Residues 270-290 (VVTGFIFGFFILYGEFTFYCW) traverse the membrane as a helical segment. Topologically, residues 291–382 (LCSKNFSNLT…SKYSLGNNSS (92 aa)) are cytoplasmic. The residue at position 349 (Ser-349) is a Phosphoserine.

Belongs to the glycosyltransferase 32 family. Heterodimer of SUR1 and CSG2.

The protein localises to the membrane. It carries out the reaction a 1D-myo-inositol-1-phospho-N-[(R)-2-hydroxy-very-long-chain fatty acyl]-(R)-4-hydroxysphingoid base + GDP-alpha-D-mannose = an alpha-D-mannosyl-(1&lt;-&gt;6)-1D-myo-inositol-1-phospho-N-[(R)-2-hydroxy-very-long-chain fatty acyl]-(R)-4-hydroxysphingoid base + GDP + H(+). Functionally, involved in the synthesis of mannosyl phosphorylinositol ceramide. Catalyzes the addition of mannosyl to phosphorylinositol ceramide. Suppressor of RVS161 mutation. The sequence is that of Mannosyl phosphorylinositol ceramide synthase SUR1 from Saccharomyces cerevisiae (strain ATCC 204508 / S288c) (Baker's yeast).